The sequence spans 270 residues: MSLTPRQLGEQLRQRKQRRQPIAVLTAWDALSASWAEAAGVDLVLVGDSLAMVALGHATTLPVTLEAMVQHTAAVERGLRHTPIVSDLPFLSYQCGPDQAVAAAGRFLKETGCAGVKLEGGEPETIAVIDRLVRSGIPVMGHLGLTPQSVHQLGYRRQATDPVAQERLWQRALELQQTGCFALVLEHVPAELATRLSAELSVPVIGIGAGEGCDGQVRVSADLLGLTPQQPPFSPALLDGRELFSQALRQWVQGVQSAPVPPANHSAPHC.

Mg(2+)-binding residues include Asp48 and Asp87. Residues 48 to 49 (DS), Asp87, and Lys117 contribute to the 3-methyl-2-oxobutanoate site. Glu119 is a binding site for Mg(2+). Residue Glu186 is the Proton acceptor of the active site.

Belongs to the PanB family. As to quaternary structure, homodecamer; pentamer of dimers. The cofactor is Mg(2+).

Its subcellular location is the cytoplasm. It carries out the reaction 3-methyl-2-oxobutanoate + (6R)-5,10-methylene-5,6,7,8-tetrahydrofolate + H2O = 2-dehydropantoate + (6S)-5,6,7,8-tetrahydrofolate. It participates in cofactor biosynthesis; (R)-pantothenate biosynthesis; (R)-pantoate from 3-methyl-2-oxobutanoate: step 1/2. Functionally, catalyzes the reversible reaction in which hydroxymethyl group from 5,10-methylenetetrahydrofolate is transferred onto alpha-ketoisovalerate to form ketopantoate. In Synechococcus sp. (strain RCC307), this protein is 3-methyl-2-oxobutanoate hydroxymethyltransferase.